The sequence spans 643 residues: Replication protein E1 (643 aa).

Residues 81-83 carry the Nuclear localization signal motif; it reads KRK. Phosphoserine; by host is present on residues serine 87, serine 91, and serine 105. The short motif at 104–113 is the Nuclear export signal element; that stretch reads ISPRLDAITL. Residues 130 to 166 form a disordered region; that stretch reads LTDSGYGNTEVEAETQVERNGEPEDCGGGGQGRDTEG. Residues 181 to 347 form a DNA-binding region region; the sequence is QQHTGTTRVL…QTIVEHGLAD (167 aa). The SF3 helicase domain maps to 446 to 596; it reads IEFIPFLTKL…FPFDRNGNAL (151 aa). Residue 472-479 coordinates ATP; it reads GPPDTGKS. Residue lysine 553 forms a Glycyl lysine isopeptide (Lys-Gly) (interchain with G-Cter in SUMO) linkage.

This sequence belongs to the papillomaviridae E1 protein family. Can form hexamers. Interacts with E2 protein; this interaction increases E1 DNA binding specificity. Interacts with host DNA polymerase subunit POLA2. Interacts with host single stranded DNA-binding protein RPA1. Interacts with host TOP1; this interaction stimulates the enzymatic activity of TOP1. Post-translationally, phosphorylated. Sumoylated.

It is found in the host nucleus. The enzyme catalyses Couples ATP hydrolysis with the unwinding of duplex DNA by translocating in the 3'-5' direction.. It carries out the reaction ATP + H2O = ADP + phosphate + H(+). Functionally, ATP-dependent DNA 3'-5' helicase required for initiation of viral DNA replication. It forms a complex with the viral E2 protein. The E1-E2 complex binds to the replication origin which contains binding sites for both proteins. During the initial step, a dimer of E1 interacts with a dimer of protein E2 leading to a complex that binds the viral origin of replication with high specificity. Then, a second dimer of E1 displaces the E2 dimer in an ATP-dependent manner to form the E1 tetramer. Following this, two E1 monomers are added to each half of the site, which results in the formation of two E1 trimers on the viral ori. Subsequently, two hexamers will be created. The double hexamer acts as a bi-directional helicase machinery and unwinds the viral DNA and then recruits the host DNA polymerase to start replication. This chain is Replication protein E1, found in Homo sapiens (Human).